Reading from the N-terminus, the 455-residue chain is MSQHVSRLGGLRGRSHGHGAFGGPYHQRLRRVGRRPRRIAMLSVHTSPLHQPGTGDAGGMNVYIVELAKRLAAIDIEVEIFTRATTGTLPPTVELAPGVLVRHVDAGPYEGLAKEDLPAQLCAFTHGVMGAWAGHRPGYYDLVHSHYWLSGHVGWLAAERWRVPLVHAMHTMAKVKNAALAEGDTPEPAARVIGEEQIVGAADRLIANTEEEADELVRHYGADPELVAVVHPGVNLERFRPADGRAAARARLGLPPDALIPLFAGRIQPLKAPDILLHAVAHLLDEDPRLRERIVVPVVGGPSGSGLAKPERLHKLAARLGVSDVIRFRPPCTQDELADWYRAASVLVMPSYNESFGLVAIEAQACGTPVIAAEVGGLPVAVRDGHSGILVPGHNPADYARELHRLSADPGLLKRLGSGAAHHAERFGWDKAAAATADVYAEAMRGYRRLRSVHG.

Residues 1-25 (MSQHVSRLGGLRGRSHGHGAFGGPY) form a disordered region. 1D-myo-inositol 3-phosphate is bound at residue His45. UDP-N-acetyl-alpha-D-glucosamine contacts are provided by residues 51–52 (QP) and Gly59. 1D-myo-inositol 3-phosphate-binding positions include 56–61 (DAGGMN), Lys114, Tyr147, Thr171, and Arg191. Arg266 and Lys271 together coordinate UDP-N-acetyl-alpha-D-glucosamine. Tyr341, Arg342, and Ala344 together coordinate Mg(2+). The UDP-N-acetyl-alpha-D-glucosamine site is built by Glu354 and Glu362. Thr368 is a binding site for Mg(2+).

Belongs to the glycosyltransferase group 1 family. MshA subfamily. As to quaternary structure, homodimer.

The catalysed reaction is 1D-myo-inositol 3-phosphate + UDP-N-acetyl-alpha-D-glucosamine = 1D-myo-inositol 2-acetamido-2-deoxy-alpha-D-glucopyranoside 3-phosphate + UDP + H(+). In terms of biological role, catalyzes the transfer of a N-acetyl-glucosamine moiety to 1D-myo-inositol 3-phosphate to produce 1D-myo-inositol 2-acetamido-2-deoxy-glucopyranoside 3-phosphate in the mycothiol biosynthesis pathway. In Streptomyces bingchenggensis (strain BCW-1), this protein is D-inositol 3-phosphate glycosyltransferase.